Here is an 802-residue protein sequence, read N- to C-terminus: uncharacterized protein (802 aa).

The EF-hand 1 domain maps to 6 to 41 (SRSEKVKRIFQQFDGNLDGGLSREEMSALVVAVNPR). TPR repeat units follow at residues 229 to 262 (FDGH…QPTD), 264 to 296 (RPHF…AESG), 305 to 338 (PQIY…CPTH), 339 to 372 (YRAL…KPDY), 373 to 406 (ADAH…KPGH), 407 to 440 (VDAL…WPNH), and 442 to 474 (RAQL…TNRV). Residues 595 to 630 (AIKAINEKILSVLDDSGSGRVDLGMFYAVIAPLCGG) enclose the EF-hand 2 domain.

This is an uncharacterized protein from Arabidopsis thaliana (Mouse-ear cress).